Reading from the N-terminus, the 928-residue chain is MVEQDNGFLQKLLKTQYDAVFHLKDENGIEIYPIFNVLPPKKEYPDYYIIIRNPISLNTLKKRLPHYTSPQDFVNDFAQIPWNAMTYNAKDSVIYKYAILLESFIKGKIVHNIRKHYPEVTYPSLGRIPEIFAESMQPSDLSSNPINTQENDEKAGLNPEMKMAFAKLDSSITERKPTNQDYRMQQKNSPAFPTHSASITPQPLASPTPVVNYANITSAHPKTHVRRGRPPVIDLPYVLRIKNILKMMRREVDQNNKTLTLCFEKLPDRNEEPTYYSVITDPICLMDIRKKVKSRKYRNFHTFEEDFQLMLTNFKLYYSQDQSNIIRAQLLEKNFNRLVRIELSKPDEDYLPEGELRYPLDDVEINDEKYQIGDWVLLHNPNDINKPIVGQIFRLWSTTDGNKWLNACWYFRPEQTVHRVDRLFYKNEVMKTGQYRDHPIQDIKGKCYVIHFTRFQRGDPSTKVNGPQFVCEFRYNESDKVFNKIRTWKACLPEELRDQDEPTIPVNGRKFFKYPSPIADLLPANATLNDKVPEPTEGAPTAPPLVGAVYLGPKLERDDLGEYSTSDDCPRYIIRPNDPPEEGKIDYETGTIITDTLTTSSMPRVNSSSTIRLPTLKQTKSIPSSNFRSSSNTPLLHQNFNQTSNFLKLENMNNSSHNLLSHPSVPKFQSPSLLEQSSRSKYHSAKKQTQLSSTAPKKPASKSFTLSSMINTLTAHTSKYNFNHIVIEAPGAFVVPVPMEKNIRTIQSTERFSRSNLKNAQNLGNTAINDINTANEQIIWFKGPGVKITERVIDSGNDLVRVPLNRWFCKNKRRKLDYEDIEEDVMEPPNDFSEDMIANIFNPPPSLNLDMDLNLSPSSNNSSNFMDLSTIASGDNDGKECDTAEESEDENEDTEDEHEIEDIPTTSAFGLNSSAEYLAFRLREFNKL.

Bromo domains are found at residues 4-112 and 240-342; these read QDNG…IVHN and RIKN…VRIE. The BAH domain maps to 368-486; the sequence is EKYQIGDWVL…ESDKVFNKIR (119 aa). Disordered stretches follow at residues 558-586, 598-635, 657-701, and 871-908; these read DDLG…GKID, TTSS…NTPL, HNLL…KPAS, and IASG…TTSA. Residues 600 to 620 are compositionally biased toward polar residues; sequence SSMPRVNSSSTIRLPTLKQTK. Positions 621–631 are enriched in low complexity; that stretch reads SIPSSNFRSSS. The segment covering 667–679 has biased composition (polar residues); the sequence is KFQSPSLLEQSSR. Serine 670 is subject to Phosphoserine. The segment covering 692–701 has biased composition (low complexity); it reads SSTAPKKPAS. Positions 883–902 are enriched in acidic residues; it reads TAEESEDENEDTEDEHEIED.

This sequence belongs to the RSC1 family. Component of the two forms of the RSC complex composed of at least either RSC1 or RSC2, and ARP7, ARP9, LDB7, NPL6, RSC3, RSC30, RSC4, RSC58, RSC6, RSC8, RSC9, SFH1, STH1, HTL1 and probably RTT102. The complexes interact with histone and histone variant components of centromeric chromatin.

The protein localises to the nucleus. Functionally, component of the chromatin structure remodeling complex (RSC), which is involved in transcription regulation and nucleosome positioning. RSC is responsible for the transfer of a histone octamer from a nucleosome core particle to naked DNA. The reaction requires ATP and involves an activated RSC-nucleosome intermediate. Remodeling reaction also involves DNA translocation, DNA twist and conformational change. As a reconfigurer of centromeric and flanking nucleosomes, RSC complex is required both for proper kinetochore function in chromosome segregation and, via a PKC1-dependent signaling pathway, for organization of the cellular cytoskeleton. This subunit is involved in meiotic sporulation through regulating IME2 expression. This chain is Chromatin structure-remodeling complex subunit RSC1 (RSC1), found in Saccharomyces cerevisiae (strain ATCC 204508 / S288c) (Baker's yeast).